The sequence spans 401 residues: Voltage-gated potassium channel subunit beta-1 (401 aa).

Positions 90, 91, 97, and 119 each coordinate NADP(+). Tyr124 functions as the Proton donor/acceptor in the catalytic mechanism. 17 residues coordinate NADP(+): Asn192, Ser222, Arg223, Gln248, Trp277, Ser278, Pro279, Leu280, Ala281, Cys282, Lys288, Arg298, Gly357, Ser359, Gln363, Glu366, and Asn367.

Belongs to the shaker potassium channel beta subunit family. As to quaternary structure, homotetramer. Interaction with tetrameric potassium channel alpha subunits gives rise to a heterooctamer.

The protein localises to the cytoplasm. Its subcellular location is the membrane. It is found in the cell membrane. The catalysed reaction is a primary alcohol + NADP(+) = an aldehyde + NADPH + H(+). It carries out the reaction a secondary alcohol + NADP(+) = a ketone + NADPH + H(+). Regulatory subunit of the voltage-gated potassium (Kv) channels composed of pore-forming and potassium-conducting alpha subunits and of regulatory beta subunits. The beta-1/KCNAB1 cytoplasmic subunit mediates closure of delayed rectifier potassium channels by physically obstructing the pore via its N-terminal domain and increases the speed of channel closure for other family members. Promotes the inactivation of KCNA1, KCNA2, KCNA4, KCNA5 and KCNA6 alpha subunit-containing channels. Displays nicotinamide adenine dinucleotide phosphate (NADPH)-dependent aldoketoreductase activity by catalyzing the NADPH-dependent reduction of a variety of endogenous aldehydes and ketones. The binding of NADPH is required for efficient down-regulation of potassium channel activity. Oxidation of the bound NADPH restrains N-terminal domain from blocking the channel, thereby decreasing N-type inactivation of potassium channel activity. This chain is Voltage-gated potassium channel subunit beta-1 (KCNAB1), found in Gallus gallus (Chicken).